The sequence spans 264 residues: MLIAIDVGNTNIKFAICTSNRILKIIRIASQQAKTADQYFFYLNNIINQLNTDFKNINNIIISSVVPSITKPMLELSKNYFNINPIILDNNHADIFNIKINLQNKALGSDRLADIIAASNIYPNKDLLIIGMGTATVFNLLNKDKCIYGQVIAPGAHILAKSMRQFTALLPEVSVSKQDKVVHNNIYHAMESGVYWGYITMVNGMIEKIIKEEKKDLHVIATGGNSYLFFDHKTAINNIETDLTIKGILYLHNMLSNNTAQNSI.

6 to 13 (DVGNTNIK) lines the ATP pocket. Substrate is bound at residue 108–111 (GSDR). Asp110 (proton acceptor) is an active-site residue. Thr134 is a binding site for ATP.

The protein belongs to the type III pantothenate kinase family. Homodimer. Requires NH4(+) as cofactor. K(+) is required as a cofactor.

The protein resides in the cytoplasm. The catalysed reaction is (R)-pantothenate + ATP = (R)-4'-phosphopantothenate + ADP + H(+). Its pathway is cofactor biosynthesis; coenzyme A biosynthesis; CoA from (R)-pantothenate: step 1/5. In terms of biological role, catalyzes the phosphorylation of pantothenate (Pan), the first step in CoA biosynthesis. In Ehrlichia canis (strain Jake), this protein is Type III pantothenate kinase.